The sequence spans 267 residues: NAD kinase (267 aa).

Asp-45 acts as the Proton acceptor in catalysis. NAD(+) contacts are provided by residues 45–46 (DG), 121–122 (NE), Arg-147, Asp-149, 160–165 (TAYSKS), and Ala-184.

It belongs to the NAD kinase family. A divalent metal cation serves as cofactor.

The protein localises to the cytoplasm. It catalyses the reaction NAD(+) + ATP = ADP + NADP(+) + H(+). Its function is as follows. Involved in the regulation of the intracellular balance of NAD and NADP, and is a key enzyme in the biosynthesis of NADP. Catalyzes specifically the phosphorylation on 2'-hydroxyl of the adenosine moiety of NAD to yield NADP. The sequence is that of NAD kinase from Lactobacillus acidophilus (strain ATCC 700396 / NCK56 / N2 / NCFM).